The chain runs to 261 residues: Cytochrome c oxidase subunit 3 (261 aa).

Topologically, residues 1 to 15 are mitochondrial matrix; that stretch reads MTHQTHAYHMVNPSP. The chain crosses the membrane as a helical span at residues 16–34; it reads WPLTGALSALLMTSGLIMW. Over 35 to 40 the chain is Mitochondrial intermembrane; the sequence is FHFNSV. A helical membrane pass occupies residues 41–66; sequence ALLMLGLTTNMLTMYQWWRDVIREST. Residues 67 to 72 lie on the Mitochondrial matrix side of the membrane; sequence FQGHHT. The helical transmembrane segment at 73–105 threads the bilayer; that stretch reads PNVQKGLRYGMILFIISEVLFFTGFFWAFYHSS. At 106-128 the chain is on the mitochondrial intermembrane side; sequence LAPTPELGGCWPPTGIHPLNPLE. A helical membrane pass occupies residues 129-152; sequence VPLLNTSVLLASGVSITWAHHSLM. Residues 153–155 are Mitochondrial matrix-facing; that stretch reads EGN. The helical transmembrane segment at 156–183 threads the bilayer; that stretch reads RNHMLQALFITIALGVYFTLLQASEYYE. Residues 184–190 are Mitochondrial intermembrane-facing; the sequence is APFTISD. A helical membrane pass occupies residues 191–223; sequence GVYGSTFFVATGFHGLHVIIGSTFLIVCFFRQL. Residues 224–232 lie on the Mitochondrial matrix side of the membrane; sequence KFHFTSSHH. The helical transmembrane segment at 233 to 256 threads the bilayer; the sequence is FGFEAAAWYWHFVDVVWLFLYVSI. The Mitochondrial intermembrane segment spans residues 257–261; that stretch reads YWWGS.

Belongs to the cytochrome c oxidase subunit 3 family. Component of the cytochrome c oxidase (complex IV, CIV), a multisubunit enzyme composed of 14 subunits. The complex is composed of a catalytic core of 3 subunits MT-CO1, MT-CO2 and MT-CO3, encoded in the mitochondrial DNA, and 11 supernumerary subunits COX4I, COX5A, COX5B, COX6A, COX6B, COX6C, COX7A, COX7B, COX7C, COX8 and NDUFA4, which are encoded in the nuclear genome. The complex exists as a monomer or a dimer and forms supercomplexes (SCs) in the inner mitochondrial membrane with NADH-ubiquinone oxidoreductase (complex I, CI) and ubiquinol-cytochrome c oxidoreductase (cytochrome b-c1 complex, complex III, CIII), resulting in different assemblies (supercomplex SCI(1)III(2)IV(1) and megacomplex MCI(2)III(2)IV(2)).

It is found in the mitochondrion inner membrane. It carries out the reaction 4 Fe(II)-[cytochrome c] + O2 + 8 H(+)(in) = 4 Fe(III)-[cytochrome c] + 2 H2O + 4 H(+)(out). Functionally, component of the cytochrome c oxidase, the last enzyme in the mitochondrial electron transport chain which drives oxidative phosphorylation. The respiratory chain contains 3 multisubunit complexes succinate dehydrogenase (complex II, CII), ubiquinol-cytochrome c oxidoreductase (cytochrome b-c1 complex, complex III, CIII) and cytochrome c oxidase (complex IV, CIV), that cooperate to transfer electrons derived from NADH and succinate to molecular oxygen, creating an electrochemical gradient over the inner membrane that drives transmembrane transport and the ATP synthase. Cytochrome c oxidase is the component of the respiratory chain that catalyzes the reduction of oxygen to water. Electrons originating from reduced cytochrome c in the intermembrane space (IMS) are transferred via the dinuclear copper A center (CU(A)) of subunit 2 and heme A of subunit 1 to the active site in subunit 1, a binuclear center (BNC) formed by heme A3 and copper B (CU(B)). The BNC reduces molecular oxygen to 2 water molecules using 4 electrons from cytochrome c in the IMS and 4 protons from the mitochondrial matrix. This is Cytochrome c oxidase subunit 3 (MT-CO3) from Nanger granti (Grant's gazelle).